Consider the following 484-residue polypeptide: uncharacterized protein (484 aa).

Positions 334–484 constitute an N-acetyltransferase domain; the sequence is IIIRQITDND…ENEWIYEVNL (151 aa).

This is an uncharacterized protein from Methanocaldococcus jannaschii (strain ATCC 43067 / DSM 2661 / JAL-1 / JCM 10045 / NBRC 100440) (Methanococcus jannaschii).